Here is a 348-residue protein sequence, read N- to C-terminus: NADH-ubiquinone oxidoreductase chain 2 (348 aa).

Helical transmembrane passes span 3-23 (PVVL…TFIG), 25-45 (HWLL…PLMI), 67-87 (SALL…WSLL), 95-115 (ATLV…HFWL), 118-138 (VLQG…KLAP), 149-171 (LNSN…GGLN), 178-198 (ILAY…HYSP), 203-223 (LNLA…KLFN), 240-260 (LSII…LSGF), 274-294 (DLAI…FFYL), and 324-344 (LILM…PTIF).

Belongs to the complex I subunit 2 family.

It localises to the mitochondrion inner membrane. The catalysed reaction is a ubiquinone + NADH + 5 H(+)(in) = a ubiquinol + NAD(+) + 4 H(+)(out). Core subunit of the mitochondrial membrane respiratory chain NADH dehydrogenase (Complex I) that is believed to belong to the minimal assembly required for catalysis. Complex I functions in the transfer of electrons from NADH to the respiratory chain. The immediate electron acceptor for the enzyme is believed to be ubiquinone. In Squalus acanthias (Spiny dogfish), this protein is NADH-ubiquinone oxidoreductase chain 2 (MT-ND2).